Here is a 261-residue protein sequence, read N- to C-terminus: Cytochrome c oxidase subunit 3 (261 aa).

Over 1-15 the chain is Mitochondrial matrix; sequence MTHQTHAYHMVNPSP. Residues 16–34 form a helical membrane-spanning segment; it reads WPLTGALSALLLTSGLMMW. Residues 35–40 are Mitochondrial intermembrane-facing; it reads FHFNNP. The helical transmembrane segment at 41-66 threads the bilayer; it reads TLLVLGLLTNLISSYQWWRDIVREGT. At 67–72 the chain is on the mitochondrial matrix side; that stretch reads YQGHHT. Residues 73–105 traverse the membrane as a helical segment; that stretch reads KVVQKGLRYGMVLFIISEVFFFLGFFWAFYHSS. Residues 106 to 128 are Mitochondrial intermembrane-facing; it reads LAPTPELGGCWPPTGISPLNPLE. A helical transmembrane segment spans residues 129–152; the sequence is VPLLNTSILLASGVSITWSHHSLM. The Mitochondrial matrix segment spans residues 153-155; sequence EGN. The chain crosses the membrane as a helical span at residues 156 to 183; the sequence is RKQMIQALMITIALGLYFTALQAMEYYE. At 184–190 the chain is on the mitochondrial intermembrane side; sequence SSFTISD. Residues 191–223 traverse the membrane as a helical segment; that stretch reads GVYGSTFFVATGFHGLHVIIGTTFLITCLLRQL. Topologically, residues 224–232 are mitochondrial matrix; the sequence is LYHFTSNHH. A helical transmembrane segment spans residues 233 to 256; it reads FGFEAAAWYWHFVDVVWLFLYVSI. Residues 257 to 261 are Mitochondrial intermembrane-facing; sequence YWWGS.

This sequence belongs to the cytochrome c oxidase subunit 3 family. As to quaternary structure, component of the cytochrome c oxidase (complex IV, CIV), a multisubunit enzyme composed of 14 subunits. The complex is composed of a catalytic core of 3 subunits MT-CO1, MT-CO2 and MT-CO3, encoded in the mitochondrial DNA, and 11 supernumerary subunits COX4I, COX5A, COX5B, COX6A, COX6B, COX6C, COX7A, COX7B, COX7C, COX8 and NDUFA4, which are encoded in the nuclear genome. The complex exists as a monomer or a dimer and forms supercomplexes (SCs) in the inner mitochondrial membrane with NADH-ubiquinone oxidoreductase (complex I, CI) and ubiquinol-cytochrome c oxidoreductase (cytochrome b-c1 complex, complex III, CIII), resulting in different assemblies (supercomplex SCI(1)III(2)IV(1) and megacomplex MCI(2)III(2)IV(2)).

The protein localises to the mitochondrion inner membrane. The enzyme catalyses 4 Fe(II)-[cytochrome c] + O2 + 8 H(+)(in) = 4 Fe(III)-[cytochrome c] + 2 H2O + 4 H(+)(out). Functionally, component of the cytochrome c oxidase, the last enzyme in the mitochondrial electron transport chain which drives oxidative phosphorylation. The respiratory chain contains 3 multisubunit complexes succinate dehydrogenase (complex II, CII), ubiquinol-cytochrome c oxidoreductase (cytochrome b-c1 complex, complex III, CIII) and cytochrome c oxidase (complex IV, CIV), that cooperate to transfer electrons derived from NADH and succinate to molecular oxygen, creating an electrochemical gradient over the inner membrane that drives transmembrane transport and the ATP synthase. Cytochrome c oxidase is the component of the respiratory chain that catalyzes the reduction of oxygen to water. Electrons originating from reduced cytochrome c in the intermembrane space (IMS) are transferred via the dinuclear copper A center (CU(A)) of subunit 2 and heme A of subunit 1 to the active site in subunit 1, a binuclear center (BNC) formed by heme A3 and copper B (CU(B)). The BNC reduces molecular oxygen to 2 water molecules using 4 electrons from cytochrome c in the IMS and 4 protons from the mitochondrial matrix. This is Cytochrome c oxidase subunit 3 (MT-CO3) from Tachyglossus aculeatus aculeatus (Southeast Australian short-beaked echidna).